The chain runs to 367 residues: tRNA pseudouridine synthase D (367 aa).

Asp78 acts as the Nucleophile in catalysis. The TRUD domain maps to 153 to 300; that stretch reads GVPNYFGEQR…KQERRRIRLT (148 aa).

The protein belongs to the pseudouridine synthase TruD family.

It carries out the reaction uridine(13) in tRNA = pseudouridine(13) in tRNA. In terms of biological role, responsible for synthesis of pseudouridine from uracil-13 in transfer RNAs. This is tRNA pseudouridine synthase D from Colwellia psychrerythraea (strain 34H / ATCC BAA-681) (Vibrio psychroerythus).